Here is a 277-residue protein sequence, read N- to C-terminus: Putative thiosulfate sulfurtransferase (277 aa).

Rhodanese domains lie at lysine 18 to alanine 125 and alanine 154 to glutamate 274. An Isoglutamyl lysine isopeptide (Lys-Gln) (interchain with Q-Cter in protein Pup) cross-link involves residue lysine 67. Cysteine 233 serves as the catalytic Cysteine persulfide intermediate. Arginine 238 provides a ligand contact to substrate.

It carries out the reaction thiosulfate + hydrogen cyanide = thiocyanate + sulfite + 2 H(+). May be a sulfotransferase involved in the formation of thiosulfate. In Mycolicibacterium smegmatis (strain ATCC 700084 / mc(2)155) (Mycobacterium smegmatis), this protein is Putative thiosulfate sulfurtransferase.